A 441-amino-acid polypeptide reads, in one-letter code: Xylose isomerase 1 (441 aa).

Active-site residues include His-105 and Asp-108. Mg(2+) contacts are provided by Glu-236, Glu-272, His-275, Asp-300, Asp-311, Asp-313, and Asp-343.

It belongs to the xylose isomerase family. In terms of assembly, homotetramer. Requires Mg(2+) as cofactor.

The protein localises to the cytoplasm. It catalyses the reaction alpha-D-xylose = alpha-D-xylulofuranose. The sequence is that of Xylose isomerase 1 (xylA1) from Xanthomonas axonopodis pv. citri (strain 306).